Consider the following 243-residue polypeptide: Carboxy-S-adenosyl-L-methionine synthase (243 aa).

S-adenosyl-L-methionine is bound by residues Y40, 65 to 67 (GCS), 90 to 91 (DN), 118 to 119 (DI), N133, and R200.

This sequence belongs to the class I-like SAM-binding methyltransferase superfamily. Cx-SAM synthase family. As to quaternary structure, homodimer.

It carries out the reaction prephenate + S-adenosyl-L-methionine = carboxy-S-adenosyl-L-methionine + 3-phenylpyruvate + H2O. Functionally, catalyzes the conversion of S-adenosyl-L-methionine (SAM) to carboxy-S-adenosyl-L-methionine (Cx-SAM). This chain is Carboxy-S-adenosyl-L-methionine synthase, found in Shewanella sediminis (strain HAW-EB3).